Consider the following 510-residue polypeptide: tRNA-2-methylthio-N(6)-dimethylallyladenosine synthase (510 aa).

The MTTase N-terminal domain occupies 19 to 144; it reads RTYQVRTFGC…LPVLLERARH (126 aa). Cys-28, Cys-73, Cys-107, Cys-181, Cys-185, and Cys-188 together coordinate [4Fe-4S] cluster. Residues 167-397 enclose the Radical SAM core domain; it reads RESPYAAWVS…TALQDRITYE (231 aa). Residues 400 to 470 enclose the TRAM domain; sequence QAQTGRTLEV…PHYLEADDVS (71 aa). The segment covering 482–492 has biased composition (basic and acidic residues); the sequence is AWEARQARPEP. A disordered region spans residues 482–510; the sequence is AWEARQARPEPESTGPRPVGLGLPTLRRA.

Belongs to the methylthiotransferase family. MiaB subfamily. As to quaternary structure, monomer. [4Fe-4S] cluster is required as a cofactor.

Its subcellular location is the cytoplasm. It catalyses the reaction N(6)-dimethylallyladenosine(37) in tRNA + (sulfur carrier)-SH + AH2 + 2 S-adenosyl-L-methionine = 2-methylsulfanyl-N(6)-dimethylallyladenosine(37) in tRNA + (sulfur carrier)-H + 5'-deoxyadenosine + L-methionine + A + S-adenosyl-L-homocysteine + 2 H(+). Catalyzes the methylthiolation of N6-(dimethylallyl)adenosine (i(6)A), leading to the formation of 2-methylthio-N6-(dimethylallyl)adenosine (ms(2)i(6)A) at position 37 in tRNAs that read codons beginning with uridine. The sequence is that of tRNA-2-methylthio-N(6)-dimethylallyladenosine synthase from Kineococcus radiotolerans (strain ATCC BAA-149 / DSM 14245 / SRS30216).